Consider the following 173-residue polypeptide: C-phycocyanin beta subunit (173 aa).

An N4-methylasparagine modification is found at Asn-73. (2R,3E)-phycocyanobilin-binding residues include Cys-83 and Cys-154.

This sequence belongs to the phycobiliprotein family. Heterodimer of an alpha and a beta subunit. Heterodimers further assemble into trimers and the trimers into hexamers. Post-translationally, contains two covalently linked bilin chromophores.

The protein resides in the cellular thylakoid membrane. In terms of biological role, light-harvesting photosynthetic bile pigment-protein from the phycobiliprotein complex (phycobilisome, PBS). Phycocyanin is the major phycobiliprotein in the PBS rod. In Mastigocladus laminosus (Fischerella sp.), this protein is C-phycocyanin beta subunit (cpcB).